The primary structure comprises 137 residues: Sec-independent protein translocase protein TatB (137 aa).

Residues Phe-2–Gly-22 form a helical membrane-spanning segment. The segment at Phe-92–Thr-137 is disordered. The span at Thr-122–Pro-131 shows a compositional bias: low complexity.

Belongs to the TatB family. In terms of assembly, the Tat system comprises two distinct complexes: a TatABC complex, containing multiple copies of TatA, TatB and TatC subunits, and a separate TatA complex, containing only TatA subunits. Substrates initially bind to the TatABC complex, which probably triggers association of the separate TatA complex to form the active translocon.

The protein resides in the cell membrane. Part of the twin-arginine translocation (Tat) system that transports large folded proteins containing a characteristic twin-arginine motif in their signal peptide across membranes. Together with TatC, TatB is part of a receptor directly interacting with Tat signal peptides. TatB may form an oligomeric binding site that transiently accommodates folded Tat precursor proteins before their translocation. This is Sec-independent protein translocase protein TatB from Mycobacterium sp. (strain JLS).